We begin with the raw amino-acid sequence, 122 residues long: UPF0382 membrane protein SAUSA300_0565 (122 aa).

The next 4 helical transmembrane spans lie at 3–23 (LFII…AFGA), 46–66 (MYHG…SINV), 69–89 (AGWL…ILVL), and 98–118 (ITPI…IATF).

It belongs to the UPF0382 family.

The protein resides in the cell membrane. In Staphylococcus aureus (strain USA300), this protein is UPF0382 membrane protein SAUSA300_0565.